The sequence spans 201 residues: Small ribosomal subunit protein uS4c (201 aa).

The disordered stretch occupies residues 20 to 44; sequence GLTNKKPRAGSDLRNQSRSGKKSQY. Residues 89 to 150 enclose the S4 RNA-binding domain; that stretch reads MRLDNILFRL…EQKSKALIQI (62 aa).

It belongs to the universal ribosomal protein uS4 family. As to quaternary structure, part of the 30S ribosomal subunit. Contacts protein S5. The interaction surface between S4 and S5 is involved in control of translational fidelity.

It is found in the plastid. It localises to the chloroplast. In terms of biological role, one of the primary rRNA binding proteins, it binds directly to 16S rRNA where it nucleates assembly of the body of the 30S subunit. With S5 and S12 plays an important role in translational accuracy. The polypeptide is Small ribosomal subunit protein uS4c (rps4) (Nicotiana tomentosiformis (Tobacco)).